The sequence spans 483 residues: tRNA sulfurtransferase (483 aa).

Residues 62–166 form the THUMP domain; sequence PQICDALTRV…QDKLTLIKAR (105 aa). Residues 184 to 185, lysine 266, glycine 288, and glutamine 297 each bind ATP; that span reads LI. Residues cysteine 345 and cysteine 457 are joined by a disulfide bond. Residues 405–483 form the Rhodanese domain; that stretch reads LADTDVLLDI…GYTNVKVYRP (79 aa). The Cysteine persulfide intermediate role is filled by cysteine 457.

The protein belongs to the ThiI family.

It is found in the cytoplasm. The enzyme catalyses [ThiI sulfur-carrier protein]-S-sulfanyl-L-cysteine + a uridine in tRNA + 2 reduced [2Fe-2S]-[ferredoxin] + ATP + H(+) = [ThiI sulfur-carrier protein]-L-cysteine + a 4-thiouridine in tRNA + 2 oxidized [2Fe-2S]-[ferredoxin] + AMP + diphosphate. The catalysed reaction is [ThiS sulfur-carrier protein]-C-terminal Gly-Gly-AMP + S-sulfanyl-L-cysteinyl-[cysteine desulfurase] + AH2 = [ThiS sulfur-carrier protein]-C-terminal-Gly-aminoethanethioate + L-cysteinyl-[cysteine desulfurase] + A + AMP + 2 H(+). It functions in the pathway cofactor biosynthesis; thiamine diphosphate biosynthesis. Catalyzes the ATP-dependent transfer of a sulfur to tRNA to produce 4-thiouridine in position 8 of tRNAs, which functions as a near-UV photosensor. Also catalyzes the transfer of sulfur to the sulfur carrier protein ThiS, forming ThiS-thiocarboxylate. This is a step in the synthesis of thiazole, in the thiamine biosynthesis pathway. The sulfur is donated as persulfide by IscS. In Yersinia enterocolitica serotype O:8 / biotype 1B (strain NCTC 13174 / 8081), this protein is tRNA sulfurtransferase.